Reading from the N-terminus, the 596-residue chain is Bromodomain-containing protein 9 (596 aa).

Basic residues predominate over residues 1–10 (MGKKHKKHKS). 2 disordered regions span residues 1 to 31 (MGKK…QYYV) and 49 to 119 (EVTE…SEGE). Basic and acidic residues predominate over residues 61–73 (SFYEDRSDHERER). Residues 74–84 (HKEKKKKKKKK) show a composition bias toward basic residues. Residues 85–98 (SEKEKDKYLDEDER) show a composition bias toward basic and acidic residues. Positions 99–109 (RRRKEEKKRKR) are enriched in basic residues. In terms of domain architecture, Bromo spans 148–252 (NESTPLQQLL…HTGFKMMSKQ (105 aa)). Positions 226-228 (TYN) are histone H4K5ac H4K8ac and histone H4K5bu H4K8bu binding. Over residues 537–547 (DFHDVHNDRGG) the composition is skewed to basic and acidic residues. The segment at 537–596 (DFHDVHNDRGGSRPSSSSSVSNNSERDHHLGSPSRISVGEQQDIHDPYEFLQSPETENQN) is disordered. The span at 548-559 (SRPSSSSSVSNN) shows a compositional bias: low complexity.

In terms of assembly, binds acetylated histones H3 and H4. Binds butyrylated histone H4.

It localises to the nucleus. Its function is as follows. Plays a role in chromatin remodeling and regulation of transcription. Acts as a chromatin reader that recognizes and binds acylated histones: binds histones that are acetylated and/or butyrylated. The chain is Bromodomain-containing protein 9 (brd9) from Xenopus tropicalis (Western clawed frog).